The chain runs to 600 residues: UvrABC system protein C (600 aa).

In terms of domain architecture, GIY-YIG spans 15–100; sequence NSAGVYEYFN…IKQLHPKYNI (86 aa). Residues 203-238 enclose the UVR domain; sequence SVLLKNLEKQMLVLAQNENYEEAAKIRDQIATIKDL.

It belongs to the UvrC family. As to quaternary structure, interacts with UvrB in an incision complex.

Its subcellular location is the cytoplasm. In terms of biological role, the UvrABC repair system catalyzes the recognition and processing of DNA lesions. UvrC both incises the 5' and 3' sides of the lesion. The N-terminal half is responsible for the 3' incision and the C-terminal half is responsible for the 5' incision. This is UvrABC system protein C from Campylobacter jejuni subsp. doylei (strain ATCC BAA-1458 / RM4099 / 269.97).